The primary structure comprises 92 residues: Small ribosomal subunit protein bS20 (92 aa).

Residues 1–23 (MANTPSAKKRAKQAEKRRSHNAS) are disordered. A compositionally biased stretch (basic residues) spans 7–20 (AKKRAKQAEKRRSH).

It belongs to the bacterial ribosomal protein bS20 family.

In terms of biological role, binds directly to 16S ribosomal RNA. This is Small ribosomal subunit protein bS20 from Pseudomonas savastanoi pv. phaseolicola (strain 1448A / Race 6) (Pseudomonas syringae pv. phaseolicola (strain 1448A / Race 6)).